A 216-amino-acid chain; its full sequence is Probable GTP-binding protein EngB (216 aa).

Residues 30-204 (SGLEVAFAGR…QMVLAGWLDL (175 aa)) enclose the EngB-type G domain. GTP contacts are provided by residues 38–45 (GRSNAGKS), 64–68 (GRTQL), 82–85 (DLPG), 149–152 (TKAD), and 182–185 (LFSA). 2 residues coordinate Mg(2+): Ser45 and Thr66.

This sequence belongs to the TRAFAC class TrmE-Era-EngA-EngB-Septin-like GTPase superfamily. EngB GTPase family. It depends on Mg(2+) as a cofactor.

Functionally, necessary for normal cell division and for the maintenance of normal septation. This is Probable GTP-binding protein EngB from Ectopseudomonas mendocina (strain ymp) (Pseudomonas mendocina).